Here is a 1578-residue protein sequence, read N- to C-terminus: Formin-2 (1578 aa).

Composition is skewed to basic and acidic residues over residues 1–17 (MGNQ…DASH), 26–35 (AGPRDAEITK), and 57–66 (TSKKKSKSDS). The tract at residues 1 to 73 (MGNQDGKLKR…SDSRASVFSN (73 aa)) is disordered. Ser89 is modified (phosphoserine). 3 disordered regions span residues 208–230 (KLLL…QPGA), 244–383 (EAEK…PSPR), and 401–458 (RQLS…GLSR). Composition is skewed to polar residues over residues 273 to 282 (SSGSHLTSET) and 290 to 300 (SAVTDSLSSPA). A compositionally biased stretch (acidic residues) spans 322–333 (DTDEECEEDAFE). The segment covering 351–364 (ASQRLEKEPEEGMR) has biased composition (basic and acidic residues). Composition is skewed to low complexity over residues 404-418 (SSPN…NQSP) and 427-442 (SVSR…AAAP). Residues Ser459, Ser489, and Ser493 each carry the phosphoserine modification. Residues 587-634 (SMDYSEGQFPRREPSMWPSSKLPEEEPSPKDVDTEPKSSILESPKKCS) are disordered. Over residues 608–622 (LPEEEPSPKDVDTEP) the composition is skewed to basic and acidic residues. Positions 643–683 (DVKSEGQATVIQQLEQTIEDLRTKIAELEKQYPALDLEGPR) form a coiled coil. Disordered stretches follow at residues 714 to 765 (RTLE…SGPQ), 786 to 836 (DAQQ…GNNC), and 880 to 944 (PALQ…MGIS). The FH1 domain maps to 735-1124 (PPPKAPPEGL…GCGFLFPPLP (390 aa)). Residues 786–795 (DAQQIQSASQ) show a composition bias toward polar residues. A compositionally biased stretch (low complexity) spans 803–817 (LGSDSQGQPSQPSLH). The segment covering 818–827 (TESETSHEHS) has biased composition (basic and acidic residues). Over residues 893–944 (LPAPPQPPPLPGLGVPPPPPAPPLPGMGIPPPPPLPGMGIPPPPPLPGMGIS) the composition is skewed to pro residues. Repeat copies occupy residues 919-929 (MGIPPPPPLPG), 930-940 (MGIPPPPPLPG), 941-951 (MGISPLPPLPG), 952-962 (MGIPPPPPLPG), 963-973 (VGIPPPPPLPG), 974-984 (VGIPPPPPLPG), 985-995 (VGIPPPPPLPG), 996-1006 (VGIPPPPPLPG), 1007-1017 (VGIPPPPPLPG), 1018-1028 (VGIPPPPPLPG), 1029-1039 (VGIPPPPPLPG), and 1040-1050 (VGIPPPPPLPG). The segment at 919–1039 (MGIPPPPPLP…GIPPPPPLPG (121 aa)) is 12 X 11 AA tandem repeats of [MV]-G-I-P-P-P-P-P-L-P-G. The segment covering 1037–1097 (LPGVGIPPPP…PPPPLLPGSG (61 aa)) has biased composition (pro residues). Residues 1037-1108 (LPGVGIPPPP…PHSSQVGSST (72 aa)) form a disordered region. The region spanning 1139 to 1554 (RKQLIEPCRP…KEAEEVCRQK (416 aa)) is the FH2 domain. Residues 1419-1455 (QELFQASQMKFEDFQKDLRKLKKDLKACEAEAGKVYQ) adopt a coiled-coil conformation. Residues 1571–1578 (KAKISMKT) form an important for interaction with SPIRE1 region.

Belongs to the formin homology family. Cappuccino subfamily. As to quaternary structure, interacts with SPIRE1. Binds actin. Interacts with CDKN1A. In terms of tissue distribution, detected in brain and in oocytes (at protein level). Expressed almost exclusively in the developing and mature central nervous system. Detected in oocytes.

The protein resides in the cytoplasm. It is found in the cytoskeleton. It localises to the cytosol. The protein localises to the perinuclear region. Its subcellular location is the nucleus. The protein resides in the nucleolus. It is found in the cell membrane. It localises to the cell cortex. The protein localises to the cytoplasmic vesicle membrane. Actin-binding protein that is involved in actin cytoskeleton assembly and reorganization. Acts as an actin nucleation factor and promotes assembly of actin filaments together with SPIRE1 and SPIRE2. Involved in intracellular vesicle transport along actin fibers, providing a novel link between actin cytoskeleton dynamics and intracellular transport. Required for asymmetric spindle positioning, asymmetric oocyte division and polar body extrusion during female germ cell meiosis. Plays a role in responses to DNA damage, cellular stress and hypoxia by protecting CDKN1A against degradation, and thereby plays a role in stress-induced cell cycle arrest. Also acts in the nucleus: together with SPIRE1 and SPIRE2, promotes assembly of nuclear actin filaments in response to DNA damage in order to facilitate movement of chromatin and repair factors after DNA damage. Protects cells against apoptosis by protecting CDKN1A against degradation. The sequence is that of Formin-2 (Fmn2) from Mus musculus (Mouse).